We begin with the raw amino-acid sequence, 272 residues long: MTFRETVCATARRNRSWLCIGLDPEPMRMPVHLPADAEGVYAFCAAIMDATSDLVCAFKPNIAFFEAFGAAGWSALERLIRLRPGPPIILDAKRGDIGSTAEAYARAAFEVLDADAVTVNPYLGGDALEPFLRHSQRGCFILCKTSNPGSHDLQDMRLADGRPLYLAVAEMARDRWNMHGNTGLVVGATHPTAITEVRRACPDMLLLVPGIGAQGGDLDTTVRAAAAVDEPLMMINVSRTVLYADRGTNFAAAARTTALRLRDAINAALMAR.

The active-site Proton donor is the Lys93.

It belongs to the OMP decarboxylase family. Type 2 subfamily.

It catalyses the reaction orotidine 5'-phosphate + H(+) = UMP + CO2. It functions in the pathway pyrimidine metabolism; UMP biosynthesis via de novo pathway; UMP from orotate: step 2/2. This is Orotidine 5'-phosphate decarboxylase from Roseiflexus sp. (strain RS-1).